A 52-amino-acid polypeptide reads, in one-letter code: Troponin C, skeletal muscle (52 aa).

EF-hand domains follow at residues Lys2–His37 and Val38–Lys52. 5 residues coordinate Ca(2+): Asp15, Asn17, Asp19, Tyr21, and Glu26.

It belongs to the troponin C family.

Troponin is the central regulatory protein of striated muscle contraction. Tn consists of three components: Tn-I which is the inhibitor of actomyosin ATPase, Tn-T which contains the binding site for tropomyosin and Tn-C. The binding of calcium to Tn-C abolishes the inhibitory action of Tn on actin filaments. The polypeptide is Troponin C, skeletal muscle (Protopterus dolloi (Slender lungfish)).